The primary structure comprises 421 residues: Pyridinium-3,5-bisthiocarboxylic acid mononucleotide nickel insertion protein (421 aa).

This sequence belongs to the LarC family.

It catalyses the reaction Ni(II)-pyridinium-3,5-bisthiocarboxylate mononucleotide = pyridinium-3,5-bisthiocarboxylate mononucleotide + Ni(2+). In terms of biological role, involved in the biosynthesis of a nickel-pincer cofactor ((SCS)Ni(II) pincer complex). Binds Ni(2+), and functions in nickel delivery to pyridinium-3,5-bisthiocarboxylic acid mononucleotide (P2TMN), to form the mature cofactor. Is thus probably required for the activation of nickel-pincer cofactor-dependent enzymes. The protein is Pyridinium-3,5-bisthiocarboxylic acid mononucleotide nickel insertion protein of Alkaliphilus metalliredigens (strain QYMF).